Consider the following 353-residue polypeptide: Galectin-9 (353 aa).

Residues 17–147 (FTGPIQGGLQ…CLKLSFITFQ (131 aa)) form the Galectin 1 domain. Residues Asn47, His60, Arg64, Asn74, and 81–87 (WGPEERK) each bind a beta-D-galactoside. Positions 167-186 (QFPRTPKGRKQKTQNFRPAH) are disordered. Residues 225 to 353 (FYTPIPNGLY…GDIQLTHVQT (129 aa)) form the Galectin 2 domain. Residues His265, Arg269, Thr279, and 285 to 291 (WGQEERS) each bind a beta-D-galactoside.

In terms of assembly, homodimer. In terms of tissue distribution, accentuated expression in liver and thymus of embryo, detected in embryonic heart, brain, lung, liver, and kidney. Highly expressed in adult thymus, small intestine, and liver, and to a lesser extent in lung, kidney, spleen, cardiac, and skeletal muscle. Barely detectable in brain and reticulocyte. Expressed in placenta, uterus and decidua during pregnancy. Expressed in CD4+ T-cells with higher levels in iTreg cells than other T-cell types and sustained high levels throughout iTreg cell differentiation (at protein level). Expressed in myeloid cells in lung. Constitutively expressed in microglia. Isoform 1 is expressed exclusively in the small intestine. Isoform 2 expression in decidua increases in pathological pregnancy from gestation day 7.5 to 13.5 and it is higher than in normal pregnancy. Isoform 3 expression in decidua is higher in normal pregnancy than in pathological pregnancy.

The protein localises to the cytoplasm. It localises to the nucleus. The protein resides in the secreted. Its function is as follows. Binds galactosides. Has high affinity for the Forssman pentasaccharide. Ligand for HAVCR2/TIM3. Binding to HAVCR2 induces T-helper type 1 lymphocyte (Th1) death. Also stimulates bactericidal activity in infected macrophages by causing macrophage activation and IL1B secretion which restricts intracellular bacterial growth. Ligand for P4HB; the interaction retains P4HB at the cell surface of Th2 T-helper cells, increasing disulfide reductase activity at the plasma membrane, altering the plasma membrane redox state and enhancing cell migration. Ligand for CD44; the interaction enhances binding of SMAD3 to the FOXP3 promoter, leading to up-regulation of FOXP3 expression and increased induced regulatory T (iTreg) cell stability and suppressive function. Promotes ability of mesenchymal stromal cells to suppress T-cell proliferation. Expands regulatory T-cells and induces cytotoxic T-cell apoptosis following virus infection. Activates ERK1/2 phosphorylation inducing cytokine (IL-6, IL-8, IL-12) and chemokine (CCL2) production in mast and dendritic cells. Inhibits degranulation and induces apoptosis of mast cells. Induces maturation and migration of dendritic cells. Inhibits natural killer (NK) cell function. Can transform NK cell phenotype from peripheral to decidual during pregnancy. Astrocyte derived galectin-9 enhances microglial TNF production. May play a role in thymocyte-epithelial interactions relevant to the biology of the thymus. May provide the molecular basis for urate flux across cell membranes, allowing urate that is formed during purine metabolism to efflux from cells and serving as an electrogenic transporter that plays an important role in renal and gastrointestinal urate excretion. Highly selective to the anion urate. Acts as an eosinophil chemoattractant. It also inhibits angiogenesis. Suppresses IFNG production by natural killer cells. This Mus musculus (Mouse) protein is Galectin-9 (Lgals9).